Consider the following 485-residue polypeptide: Rhamnulokinase (485 aa).

8–12 (ASSGR) contacts ATP. Residues G78 and 231 to 233 (HDT) contribute to the substrate site. D232 serves as the catalytic Proton acceptor. ATP is bound at residue T254. A substrate-binding site is contributed by N291. Q299 is a binding site for ATP. Cysteines 348 and 365 form a disulfide. An ATP-binding site is contributed by G397. C408 and C412 are oxidised to a cystine.

The protein belongs to the rhamnulokinase family. It depends on Mg(2+) as a cofactor.

It carries out the reaction L-rhamnulose + ATP = L-rhamnulose 1-phosphate + ADP + H(+). The protein operates within carbohydrate degradation; L-rhamnose degradation; glycerone phosphate from L-rhamnose: step 2/3. Involved in the catabolism of L-rhamnose (6-deoxy-L-mannose). Catalyzes the transfer of the gamma-phosphate group from ATP to the 1-hydroxyl group of L-rhamnulose to yield L-rhamnulose 1-phosphate. This Yersinia pestis bv. Antiqua (strain Angola) protein is Rhamnulokinase.